The chain runs to 66 residues: Large ribosomal subunit protein bL33c (66 aa).

The protein belongs to the bacterial ribosomal protein bL33 family.

The protein resides in the plastid. The protein localises to the chloroplast. This Cycas taitungensis (Prince sago) protein is Large ribosomal subunit protein bL33c.